The chain runs to 235 residues: Octanoyltransferase (235 aa).

The 176-residue stretch at 28-203 (GRAEETLLLL…PFAGLPADAL (176 aa)) folds into the BPL/LPL catalytic domain. Residues 66–73 (RGGDVTWH), 133–135 (SIG), and 146–148 (GFA) each bind substrate. The active-site Acyl-thioester intermediate is Cys164. The interval 202–235 (ALPEQPRDAVQPSSCDDVHAPSTTSRRPPCPLTV) is disordered.

The protein belongs to the LipB family.

It localises to the cytoplasm. It catalyses the reaction octanoyl-[ACP] + L-lysyl-[protein] = N(6)-octanoyl-L-lysyl-[protein] + holo-[ACP] + H(+). It participates in protein modification; protein lipoylation via endogenous pathway; protein N(6)-(lipoyl)lysine from octanoyl-[acyl-carrier-protein]: step 1/2. Its function is as follows. Catalyzes the transfer of endogenously produced octanoic acid from octanoyl-acyl-carrier-protein onto the lipoyl domains of lipoate-dependent enzymes. Lipoyl-ACP can also act as a substrate although octanoyl-ACP is likely to be the physiological substrate. In Geobacter sulfurreducens (strain ATCC 51573 / DSM 12127 / PCA), this protein is Octanoyltransferase.